The sequence spans 182 residues: MQTEHVILLNAQGVPTGTLEKYAAHTADTLLHLAFSSWLFNAKGQLLVTRRALSKKAWPGVWTNSVCGHPQMGESNEDAVIRRCRFELGVEITAPEPVYPDFRYRATDPNGIVENEVCPVFAARTTSALQINDDEVMDYQWCDLADVLRGIDATPWAFSPWMVMQAANSEARKLLSAFAQHN.

His-25 and His-32 together coordinate Mn(2+). Residues 30-164 (LLHLAFSSWL…PWAFSPWMVM (135 aa)) form the Nudix hydrolase domain. Cys-67 is a catalytic residue. His-69 contacts Mn(2+). A Mg(2+)-binding site is contributed by Glu-87. Residues Glu-114 and Glu-116 each contribute to the Mn(2+) site. Glu-116 is an active-site residue.

It belongs to the IPP isomerase type 1 family. As to quaternary structure, homodimer. The cofactor is Mg(2+). Mn(2+) serves as cofactor.

Its subcellular location is the cytoplasm. It carries out the reaction isopentenyl diphosphate = dimethylallyl diphosphate. It functions in the pathway isoprenoid biosynthesis; dimethylallyl diphosphate biosynthesis; dimethylallyl diphosphate from isopentenyl diphosphate: step 1/1. In terms of biological role, catalyzes the 1,3-allylic rearrangement of the homoallylic substrate isopentenyl (IPP) to its highly electrophilic allylic isomer, dimethylallyl diphosphate (DMAPP). This chain is Isopentenyl-diphosphate Delta-isomerase, found in Escherichia coli O17:K52:H18 (strain UMN026 / ExPEC).